Consider the following 290-residue polypeptide: MIKSSWRKIAMLAAAVPLLLASGALWASTDAIHQKLTDLEKRSGGRLGVALINTADNSQILYRGDERFAMCSTSKVMAAAAVLKQSESNKEVVNKRLEINAADLVVWSPITEKHLQSGMTLAELSAATLQYSDNTAMNLIIGYLGGPEKVTAFARSIGDATFRLDRTEPTLNTAIPGDERDTSTPLAMAESLRKLTLGDALGEQQRAQLVTWLKGNTTGGQSIRAGLPESWVVGDKTGAGDYGTTNDIAVIWPEDHAPLVLVTYFTQPQQDAKNRKEVLAAAAKIVTEGL.

An N-terminal signal peptide occupies residues 1-27 (MIKSSWRKIAMLAAAVPLLLASGALWA). S72 serves as the catalytic Acyl-ester intermediate. 236–238 (KTG) contributes to the substrate binding site.

Belongs to the class-A beta-lactamase family.

It catalyses the reaction a beta-lactam + H2O = a substituted beta-amino acid. Hydrolyzes broad-spectrum beta-lactam antibiotics. Active against all third-generation cephalosporins but ceftazidime. In Klebsiella oxytoca, this protein is Beta-lactamase OXY-2 (bla).